The following is a 215-amino-acid chain: Octanoyltransferase (215 aa).

The BPL/LPL catalytic domain occupies P31–E206. Substrate-binding positions include R70–H77, S137–G139, and G150–A152. C168 serves as the catalytic Acyl-thioester intermediate.

The protein belongs to the LipB family.

Its subcellular location is the cytoplasm. The catalysed reaction is octanoyl-[ACP] + L-lysyl-[protein] = N(6)-octanoyl-L-lysyl-[protein] + holo-[ACP] + H(+). Its pathway is protein modification; protein lipoylation via endogenous pathway; protein N(6)-(lipoyl)lysine from octanoyl-[acyl-carrier-protein]: step 1/2. Its function is as follows. Catalyzes the transfer of endogenously produced octanoic acid from octanoyl-acyl-carrier-protein onto the lipoyl domains of lipoate-dependent enzymes. Lipoyl-ACP can also act as a substrate although octanoyl-ACP is likely to be the physiological substrate. This chain is Octanoyltransferase, found in Pseudomonas putida (strain GB-1).